The primary structure comprises 312 residues: Malate dehydrogenase (312 aa).

Residues glycine 7–glycine 12 and aspartate 32 each bind NAD(+). Positions 82 and 88 each coordinate substrate. Residues asparagine 95 and valine 118–asparagine 120 contribute to the NAD(+) site. Positions 120 and 151 each coordinate substrate. Histidine 175 functions as the Proton acceptor in the catalytic mechanism.

Belongs to the LDH/MDH superfamily. MDH type 3 family.

The catalysed reaction is (S)-malate + NAD(+) = oxaloacetate + NADH + H(+). Catalyzes the reversible oxidation of malate to oxaloacetate. The sequence is that of Malate dehydrogenase from Cytophaga hutchinsonii (strain ATCC 33406 / DSM 1761 / CIP 103989 / NBRC 15051 / NCIMB 9469 / D465).